We begin with the raw amino-acid sequence, 372 residues long: MKFIDEARIEVIAGDGGDGSASMRREKFVPFGGPDGGDGGRGGSVYVIADRNINTLIDYRYAKKHMARNGENGRGSDCYGKGGDDITLRMPVGTVINDMDTGELIADLTEHDQKVLVAKGGAGGLGNLHFKSSTNRAPRQKTDGKPGERRMLKLELKVLADVGLLGMPNAGKSTFISSVSNAKPKIADYPFTTLAPNLGVVRVGPGKSFVIADIPGLIEGAAEGAGLGHQFLRHLQRTGLLLHLVDLAPFDERVDPVAEARAIVGELRKYDESLYEKPRWLVLNKLDMVPEDERRARVADFIERFGWTGPVFEISALTGQGCEGLVYAIHDYLVEHSDAHRAELAEDLASDVRFRDAPGAGGEPHERDAGAH.

Residues 1–159 form the Obg domain; sequence MKFIDEARIE…RMLKLELKVL (159 aa). Positions 128–147 are disordered; sequence LHFKSSTNRAPRQKTDGKPG. Positions 160–334 constitute an OBG-type G domain; it reads ADVGLLGMPN…LVYAIHDYLV (175 aa). GTP contacts are provided by residues 166–173, 191–195, 213–216, 284–287, and 315–317; these read GMPNAGKS, FTTLA, DIPG, NKLD, and SAL. Mg(2+) contacts are provided by S173 and T193.

It belongs to the TRAFAC class OBG-HflX-like GTPase superfamily. OBG GTPase family. Monomer. Mg(2+) is required as a cofactor.

It is found in the cytoplasm. Its function is as follows. An essential GTPase which binds GTP, GDP and possibly (p)ppGpp with moderate affinity, with high nucleotide exchange rates and a fairly low GTP hydrolysis rate. Plays a role in control of the cell cycle, stress response, ribosome biogenesis and in those bacteria that undergo differentiation, in morphogenesis control. This chain is GTPase Obg, found in Burkholderia mallei (strain NCTC 10247).